A 114-amino-acid polypeptide reads, in one-letter code: Ribosome-binding factor A (114 aa).

This sequence belongs to the RbfA family. As to quaternary structure, monomer. Binds 30S ribosomal subunits, but not 50S ribosomal subunits or 70S ribosomes.

It is found in the cytoplasm. One of several proteins that assist in the late maturation steps of the functional core of the 30S ribosomal subunit. Associates with free 30S ribosomal subunits (but not with 30S subunits that are part of 70S ribosomes or polysomes). Required for efficient processing of 16S rRNA. May interact with the 5'-terminal helix region of 16S rRNA. The sequence is that of Ribosome-binding factor A from Listeria monocytogenes serotype 4b (strain F2365).